The primary structure comprises 350 residues: S-adenosylmethionine:tRNA ribosyltransferase-isomerase (350 aa).

It belongs to the QueA family. As to quaternary structure, monomer.

Its subcellular location is the cytoplasm. It catalyses the reaction 7-aminomethyl-7-carbaguanosine(34) in tRNA + S-adenosyl-L-methionine = epoxyqueuosine(34) in tRNA + adenine + L-methionine + 2 H(+). It participates in tRNA modification; tRNA-queuosine biosynthesis. Transfers and isomerizes the ribose moiety from AdoMet to the 7-aminomethyl group of 7-deazaguanine (preQ1-tRNA) to give epoxyqueuosine (oQ-tRNA). The polypeptide is S-adenosylmethionine:tRNA ribosyltransferase-isomerase (Vibrio vulnificus (strain YJ016)).